The chain runs to 255 residues: Electron transfer flavoprotein subunit beta (255 aa).

Residue alanine 2 is modified to N-acetylalanine. Residues alanine 9, asparagine 39–cysteine 42, cysteine 66, and glycine 123–threonine 134 each bind AMP. Residues alanine 183–lysine 205 form a recognition loop region. Position 200 is an N6,N6,N6-trimethyllysine; by ETFBKMT; alternate (lysine 200). Lysine 200 carries the post-translational modification N6-acetyllysine; alternate. Lysine 200 is modified (N6-methyllysine; alternate). An N6,N6,N6-trimethyllysine; by ETFBKMT modification is found at lysine 203. Lysine 210 is modified (N6-acetyllysine; alternate). Position 210 is an N6-succinyllysine; alternate (lysine 210). Phosphoserine occurs at positions 223 and 226. N6-acetyllysine is present on lysine 238. Lysine 248 is subject to N6-acetyllysine; alternate. N6-succinyllysine; alternate is present on lysine 248.

Belongs to the ETF beta-subunit/FixA family. As to quaternary structure, heterodimer composed of ETFA and ETFB. Identified in a complex that contains ETFA, ETFB and ETFRF1. Interacts with ACADM. Methylated. Trimethylation at Lys-200 and Lys-203 may negatively regulate the activity in electron transfer from acyl-CoA dehydrogenases.

Its subcellular location is the mitochondrion matrix. Its function is as follows. Heterodimeric electron transfer flavoprotein that accepts electrons from several mitochondrial dehydrogenases, including acyl-CoA dehydrogenases, glutaryl-CoA and sarcosine dehydrogenase. It transfers the electrons to the main mitochondrial respiratory chain via ETF-ubiquinone oxidoreductase. Required for normal mitochondrial fatty acid oxidation and normal amino acid metabolism. ETFB binds an AMP molecule that probably has a purely structural role. This Pongo abelii (Sumatran orangutan) protein is Electron transfer flavoprotein subunit beta.